The sequence spans 283 residues: Protein boule-like (283 aa).

Residues 1 to 25 are disordered; it reads MQTDSLSPSPNPVSPVPLNNPTSAP. The RRM domain maps to 33-110; the sequence is NRIFVGGIDF…KKLNIGPAIR (78 aa). The region spanning 160–184 is the DAZ domain; sequence PSRSVCSSPVMVAQPIYQQPAYHYQ.

It belongs to the RRM DAZ family. Interacts with DAZ1 and DAZL.

The protein localises to the cytoplasm. Functionally, probable RNA-binding protein, which may be required during spermatogenesis. May act by binding to the 3'-UTR of mRNAs and regulating their translation. The protein is Protein boule-like (BOLL) of Macaca fascicularis (Crab-eating macaque).